We begin with the raw amino-acid sequence, 459 residues long: tRNA modification GTPase MnmE (459 aa).

The (6S)-5-formyl-5,6,7,8-tetrahydrofolate site is built by Arg20, Glu85, and Arg124. Positions 221 to 380 (GLSTVIIGRP…LEMAIQSLFF (160 aa)) constitute a TrmE-type G domain. Residue Asn231 participates in K(+) binding. GTP contacts are provided by residues 231–236 (NVGKSS), 250–256 (TDIPGTT), and 275–278 (DTAG). Position 235 (Ser235) interacts with Mg(2+). The K(+) site is built by Thr250, Ile252, and Thr255. Thr256 lines the Mg(2+) pocket. A (6S)-5-formyl-5,6,7,8-tetrahydrofolate-binding site is contributed by Lys459.

Belongs to the TRAFAC class TrmE-Era-EngA-EngB-Septin-like GTPase superfamily. TrmE GTPase family. Homodimer. Heterotetramer of two MnmE and two MnmG subunits. K(+) serves as cofactor.

The protein resides in the cytoplasm. In terms of biological role, exhibits a very high intrinsic GTPase hydrolysis rate. Involved in the addition of a carboxymethylaminomethyl (cmnm) group at the wobble position (U34) of certain tRNAs, forming tRNA-cmnm(5)s(2)U34. This is tRNA modification GTPase MnmE from Bacillus pumilus (strain SAFR-032).